We begin with the raw amino-acid sequence, 591 residues long: L-fucose isomerase (591 aa).

Catalysis depends on proton acceptor residues Glu337 and Asp361. The Mn(2+) site is built by Glu337, Asp361, and His528.

This sequence belongs to the L-fucose isomerase family. In terms of assembly, homohexamer. It depends on Mn(2+) as a cofactor.

The protein localises to the cytoplasm. The enzyme catalyses L-fucose = L-fuculose. The protein operates within carbohydrate degradation; L-fucose degradation; L-lactaldehyde and glycerone phosphate from L-fucose: step 1/3. Functionally, converts the aldose L-fucose into the corresponding ketose L-fuculose. The chain is L-fucose isomerase from Escherichia coli O17:K52:H18 (strain UMN026 / ExPEC).